Here is a 377-residue protein sequence, read N- to C-terminus: EPS I polysaccharide export outer membrane protein EpsA (377 aa).

The N-terminal stretch at 1 to 23 (MFVSIPSIRKTVMSLCAVPLMAA) is a signal peptide. Cysteine 24 is lipidated: N-palmitoyl cysteine. The S-diacylglycerol cysteine moiety is linked to residue cysteine 24.

It belongs to the BexD/CtrA/VexA family.

It is found in the cell outer membrane. Probably involved in polymerization and/or export of exopolysaccharide EPS I which functions as a virulence factor. The chain is EPS I polysaccharide export outer membrane protein EpsA (epsA) from Ralstonia solanacearum (Pseudomonas solanacearum).